The following is a 157-amino-acid chain: uncharacterized protein (157 aa).

4 helical membrane-spanning segments follow: residues 3-23 (IFSF…MFIS), 24-44 (AFLS…ALAV), 47-67 (LMLG…ATAG), and 105-125 (IALL…IAGW).

This sequence to E.coli YqaA.

It localises to the cell membrane. This is an uncharacterized protein from Haemophilus influenzae (strain ATCC 51907 / DSM 11121 / KW20 / Rd).